The primary structure comprises 619 residues: MALLQIAEPGQAAAPHQHRLAVGIDLGTTNSLVASVRSGQSVILNDEQERSLVPSVVHYGVEEKKVGLEAFEQASLDPKNTVISVKRLIGRSLPDVQSRYSSLPYEFVASENGLPLIITAQGPKSPIEVSSDILSRLNHIAEQRLGGELSGVVITVPAYFDDAQRQSTKDAARLAGLNVLRLLNEPTAAALAYGLDSGQEGIIAVYDLGGGTFDISILRLSKGIFEVLATGGDTALGGDDFDHLIADWVIEQTKLKPQTANQQRELITLANQAKITLTNEKSAVISWQDFSVEISREQFNELIYPLVKRSLLTCRRALKDANVESEEVQAVVMVGGSTRVPYVREQVGEFFGKTPLTSIDPDKVVALGAAIQADILVGNKTDSDMLLLDVVPLSLGIETMGGLVEKIIPRNTTIPVARAQEFTTFKDGQTAMSVHVLQGERELVDDCRSLGRFTLRGIPPMAAGAAHIRVTYQVDADGLLSVTAMEKSTKVQASIQIKPSYGLTDEEVTAMIKSSFDNAQEDLQARELAEQRVEADRVIESVIVALQADGAELLSTDEFHHIETVLKQLMDVKQGSDRDAIAQGIKALDTATQEFAARRMNASINKALTGKNLSDIENP.

The protein belongs to the heat shock protein 70 family.

Chaperone involved in the maturation of iron-sulfur cluster-containing proteins. Has a low intrinsic ATPase activity which is markedly stimulated by HscB. The chain is Chaperone protein HscA homolog from Haemophilus influenzae (strain 86-028NP).